A 526-amino-acid polypeptide reads, in one-letter code: Vitamin B6 transporter bsu1 (526 aa).

Positions 1 to 53 (MASKIASLFSPSETASKDQHENVAEDLELGTASSQSDGIHETNSEYDEKKREE) are disordered. Basic and acidic residues predominate over residues 38–53 (GIHETNSEYDEKKREE). Helical transmembrane passes span 81–101 (WSIVFMFCLMQIYVIWTSNGF), 118–138 (VATLCLSMNILGSGLGPMFLG), 147–167 (KPVYFCSIFVYTVFNISCALP), 173–192 (MIISHFIIGVAGSTALTNVA), 204–224 (AGVPMSLFVWACAGGAIGAPM), 238–257 (WLYYINIIVGGFFLIVILII), 314–330 (LYNFYAYGISYFFLTAI), 349–366 (YLSGFVASTLLFLYQPIQ), 387–407 (FTSALFITLLFPAGMFLFAFT), 413–432 (PWMSPIVGNSMVTVANGHNW), 444–461 (PLLSGSAVAAFTLPSFIG), and 480–501 (WAVATMAFISISIPFIIYTFYF).

The protein belongs to the major facilitator superfamily. CAR1 family.

Its subcellular location is the membrane. Functionally, thiamine-regulated, high affinity import carrier of pyridoxine, pyridoxal and pyridoxamine. Also imports, but does not export, amiloride and so confers sensitivity. The polypeptide is Vitamin B6 transporter bsu1 (bsu1) (Schizosaccharomyces pombe (strain 972 / ATCC 24843) (Fission yeast)).